Reading from the N-terminus, the 397-residue chain is Acetyl-CoA acetyltransferase, cytosolic (397 aa).

M1 is subject to N-acetylmethionine. The Acyl-thioester intermediate role is filled by C92. K200 carries the post-translational modification N6-acetyllysine. CoA contacts are provided by R223 and S226. N6-acetyllysine occurs at positions 233 and 235. S252 lines the CoA pocket. C383 functions as the Proton donor/acceptor in the catalytic mechanism.

This sequence belongs to the thiolase-like superfamily. Thiolase family. In terms of assembly, homotetramer.

It is found in the cytoplasm. It localises to the cytosol. The catalysed reaction is 2 acetyl-CoA = acetoacetyl-CoA + CoA. Its pathway is lipid metabolism; fatty acid metabolism. Functionally, involved in the biosynthetic pathway of cholesterol. The protein is Acetyl-CoA acetyltransferase, cytosolic (Acat2) of Rattus norvegicus (Rat).